Here is a 95-residue protein sequence, read N- to C-terminus: Small ribosomal subunit protein bS20 (95 aa).

The protein belongs to the bacterial ribosomal protein bS20 family.

In terms of biological role, binds directly to 16S ribosomal RNA. The chain is Small ribosomal subunit protein bS20 from Fervidobacterium nodosum (strain ATCC 35602 / DSM 5306 / Rt17-B1).